A 212-amino-acid polypeptide reads, in one-letter code: uncharacterized protein (212 aa).

This is an uncharacterized protein from Acanthamoeba polyphaga (Amoeba).